Consider the following 188-residue polypeptide: ATP-dependent protease subunit HslV (188 aa).

Thr8 is a catalytic residue. 3 residues coordinate Na(+): Ala165, Cys168, and Thr171.

This sequence belongs to the peptidase T1B family. HslV subfamily. In terms of assembly, a double ring-shaped homohexamer of HslV is capped on each side by a ring-shaped HslU homohexamer. The assembly of the HslU/HslV complex is dependent on binding of ATP.

The protein resides in the cytoplasm. The catalysed reaction is ATP-dependent cleavage of peptide bonds with broad specificity.. With respect to regulation, allosterically activated by HslU binding. Protease subunit of a proteasome-like degradation complex believed to be a general protein degrading machinery. The protein is ATP-dependent protease subunit HslV of Neorickettsia sennetsu (strain ATCC VR-367 / Miyayama) (Ehrlichia sennetsu).